The chain runs to 432 residues: MTQMLAARAGEITTAMKRVAEKEGLSPEFIRQGVAEGSIVIPANINHRNLDPVGFGKGLKTKVNANIGTSTSFTDIEKELEKLKVVLEAGADAVMDLSTGGEIDQGRRRIIEESTIAVGTVPIYQSFLENRNKRGSMIAMTADDLFEVVERHCSDGVDFITVHCGITLEVLERIKKQSRITDIVSRGGSFLTGWMLHHGKENPLYEQFDRLLDICLKYDVTLSLGDGLRPGCLADATDRAQIQELIILGELVDKAREKGVQAMVEGPGHVPLDQIRANIEVQKTLCKGAPFYVLGPLVTDVAPGYDHITAAIGGTVAAAAGADFLCYVTPAEHLGLPTLEDVREGIMASRIAAHAADIVKGIPGALEWDKKMARARKALDWDEQIKLAIDPQRAAKIRQERNPDGHEACTMCGDFCAMKIVAQYLGKEPESC.

Residues asparagine 66, methionine 95, tyrosine 124, histidine 163, 185–187, 226–229, and glutamate 265 each bind substrate; these read SRG and DGLR. Residue histidine 269 participates in Zn(2+) binding. Tyrosine 292 lines the substrate pocket. Histidine 333 is a binding site for Zn(2+). Residues cysteine 409, cysteine 412, and cysteine 416 each contribute to the [4Fe-4S] cluster site.

Belongs to the ThiC family. [4Fe-4S] cluster is required as a cofactor.

The catalysed reaction is 5-amino-1-(5-phospho-beta-D-ribosyl)imidazole + S-adenosyl-L-methionine = 4-amino-2-methyl-5-(phosphooxymethyl)pyrimidine + CO + 5'-deoxyadenosine + formate + L-methionine + 3 H(+). It participates in cofactor biosynthesis; thiamine diphosphate biosynthesis. In terms of biological role, catalyzes the synthesis of the hydroxymethylpyrimidine phosphate (HMP-P) moiety of thiamine from aminoimidazole ribotide (AIR) in a radical S-adenosyl-L-methionine (SAM)-dependent reaction. The chain is Phosphomethylpyrimidine synthase from Desulforamulus reducens (strain ATCC BAA-1160 / DSM 100696 / MI-1) (Desulfotomaculum reducens).